We begin with the raw amino-acid sequence, 182 residues long: Glutamyl-tRNA(Gln) amidotransferase subunit F, mitochondrial (182 aa).

The protein belongs to the GatF family. Subunit of the heterotrimeric GatFAB amidotransferase (AdT) complex, composed of A, B and F subunits.

Its subcellular location is the mitochondrion inner membrane. The catalysed reaction is L-glutamyl-tRNA(Gln) + L-glutamine + ATP + H2O = L-glutaminyl-tRNA(Gln) + L-glutamate + ADP + phosphate + H(+). In terms of biological role, allows the formation of correctly charged Gln-tRNA(Gln) through the transamidation of misacylated Glu-tRNA(Gln) in the mitochondria. The reaction takes place in the presence of glutamine and ATP through an activated gamma-phospho-Glu-tRNA(Gln). Required for proper protein synthesis within the mitochondrion. The chain is Glutamyl-tRNA(Gln) amidotransferase subunit F, mitochondrial from Candida tropicalis (strain ATCC MYA-3404 / T1) (Yeast).